The chain runs to 269 residues: Bis(5'-nucleosyl)-tetraphosphatase, symmetrical (269 aa).

It belongs to the Ap4A hydrolase family.

The catalysed reaction is P(1),P(4)-bis(5'-adenosyl) tetraphosphate + H2O = 2 ADP + 2 H(+). Functionally, hydrolyzes diadenosine 5',5'''-P1,P4-tetraphosphate to yield ADP. The polypeptide is Bis(5'-nucleosyl)-tetraphosphatase, symmetrical (Vibrio vulnificus (strain YJ016)).